Reading from the N-terminus, the 611-residue chain is MSETLERHAFGAEVGRLLDLVVHALYSEREIFLRELVANAADAVDRRRFGALTDPALSLPADAKVRIRPDKAARTLAISDPGIGMSKEDLAQNLGTIARSGTRAFSQSLADAKPDERPSLIGQFGVGFYSAFMVADRVEVTSRKAGSDEAWTWASEGQGEYTLSPATRAEPGTDVVLHIKADADEYLEPLRLETIVRKWADHITVPITLLRDGEEVSGNEGTALWRKPKSEVSEEAYTAFYRHVTHNFDAPWATLHWRAEGALDFTALLFIPGMKPFLAVEEERESRVRLHVRRMFITDEAGLLPSWLRFVQGVVDTEDLPLNVSREMLQATPVLARIRRAVTGKVMAELKSRAKDAESYATFWQAFGPVLKEGIWEDAEHRDDIAALLRFRSTAVEGWTSFADYVSRMKPNQEAIYILVGDDAAALARSAQIEGFRARGIEVLLLSDHVDAFWPERLDKFDGKPIRSITQSADDLSAFAPEGEAAGEAADLTELLPKLKEILKDDVAEVRASQRLVESAVLLSASSGGPDLQMQRLLRRAGRGFGAGLPVLELNPRHALVRRIAERARAGEDVGEAAQTLLDLAHVQGGDPPRDPVAFARRVAAALAAQA.

An a; substrate-binding region spans residues 1–326 (MSETLERHAF…TEDLPLNVSR (326 aa)). The interval 327–536 (EMLQATPVLA…SGGPDLQMQR (210 aa)) is b. Residues 537–611 (LLRRAGRGFG…RVAAALAAQA (75 aa)) form a c region.

This sequence belongs to the heat shock protein 90 family. Homodimer.

Its subcellular location is the cytoplasm. Molecular chaperone. Has ATPase activity. In Methylobacterium sp. (strain 4-46), this protein is Chaperone protein HtpG.